A 462-amino-acid chain; its full sequence is Glycine--tRNA ligase (462 aa).

Residues Arg98 and Glu174 each coordinate substrate. ATP contacts are provided by residues 206-208 (RNE), 216-221 (FRTREF), 290-291 (EL), and 334-337 (GADR). 221–225 (FEQME) provides a ligand contact to substrate. 330 to 334 (EPSLG) provides a ligand contact to substrate.

The protein belongs to the class-II aminoacyl-tRNA synthetase family. As to quaternary structure, homodimer.

The protein localises to the cytoplasm. The catalysed reaction is tRNA(Gly) + glycine + ATP = glycyl-tRNA(Gly) + AMP + diphosphate. Catalyzes the attachment of glycine to tRNA(Gly). The sequence is that of Glycine--tRNA ligase from Lachnoclostridium phytofermentans (strain ATCC 700394 / DSM 18823 / ISDg) (Clostridium phytofermentans).